The following is a 424-amino-acid chain: Hemagglutinin-esterase (424 aa).

Positions 1–16 (MFLLPRFILVSCIIGS) are cleaved as a signal peptide. Residues 7-127 (FILVSCIIGS…SNDIWMQNKG (121 aa)) are esterase domain 1. Residues 17–392 (LGFYNPPTNV…PICVYDPLPV (376 aa)) lie on the Virion surface side of the membrane. Residue serine 40 is the Nucleophile of the active site. Cysteines 44 and 65 form a disulfide. Residues asparagine 54, asparagine 89, asparagine 114, asparagine 153, asparagine 236, and asparagine 301 are each glycosylated (N-linked (GlcNAc...) asparagine; by host). 3 disulfides stabilise this stretch: cysteine 113/cysteine 162, cysteine 197/cysteine 276, and cysteine 205/cysteine 249. Residues 128-266 (LFYTQVYKNM…GNYLAISNEL (139 aa)) form a receptor binding region. Residues 267 to 379 (LLTVPTKAIC…RCPTAADINN (113 aa)) form an esterase domain 2 region. An intrachain disulfide couples cysteine 307 to cysteine 312. Asparagine 316 carries N-linked (GlcNAc...) asparagine; by host glycosylation. Active-site charge relay system residues include aspartate 326 and histidine 329. A disulfide bridge links cysteine 347 with cysteine 371. Asparagine 358 is a glycosylation site (N-linked (GlcNAc...) asparagine; by host). Residues 393–413 (ILLGILLGVAVIIIVVLLLYF) form a helical membrane-spanning segment. The Intravirion segment spans residues 414–424 (MVDNGTRLHDA). A glycan (N-linked (GlcNAc...) asparagine; by host) is linked at asparagine 417.

It belongs to the influenza type C/coronaviruses hemagglutinin-esterase family. In terms of assembly, homodimer; disulfide-linked. Forms a complex with the M protein in the pre-Golgi. Associates then with S-M complex to form a ternary complex S-M-HE. N-glycosylated in the host RER.

Its subcellular location is the virion membrane. The protein localises to the host cell membrane. The catalysed reaction is N-acetyl-9-O-acetylneuraminate + H2O = N-acetylneuraminate + acetate + H(+). It catalyses the reaction N-acetyl-4-O-acetylneuraminate + H2O = N-acetylneuraminate + acetate + H(+). Its function is as follows. Structural protein that makes short spikes at the surface of the virus. Contains receptor binding and receptor-destroying activities. Mediates de-O-acetylation of N-acetyl-4-O-acetylneuraminic acid, which is probably the receptor determinant recognized by the virus on the surface of erythrocytes and susceptible cells. This receptor-destroying activity is important for virus release as it probably helps preventing self-aggregation and ensures the efficient spread of the progeny virus from cell to cell. May serve as a secondary viral attachment protein for initiating infection, the spike protein being the major one. May become a target for both the humoral and the cellular branches of the immune system. This Homo sapiens (Human) protein is Hemagglutinin-esterase.